Reading from the N-terminus, the 327-residue chain is Malate dehydrogenase (327 aa).

NAD(+) is bound at residue 12–18 (GAAGQIG). The substrate site is built by R93 and R99. NAD(+) contacts are provided by residues N106, Q113, and 130–132 (VGN). 2 residues coordinate substrate: N132 and R163. H188 (proton acceptor) is an active-site residue.

Belongs to the LDH/MDH superfamily. MDH type 2 family.

The catalysed reaction is (S)-malate + NAD(+) = oxaloacetate + NADH + H(+). Functionally, catalyzes the reversible oxidation of malate to oxaloacetate. The sequence is that of Malate dehydrogenase from Paraburkholderia phymatum (strain DSM 17167 / CIP 108236 / LMG 21445 / STM815) (Burkholderia phymatum).